Here is a 338-residue protein sequence, read N- to C-terminus: Holliday junction branch migration complex subunit RuvB (338 aa).

The tract at residues Met1–Tyr180 is large ATPase domain (RuvB-L). Residues Leu19, Arg20, Gly61, Lys64, Thr65, Thr66, Glu127 to Tyr129, Arg170, Tyr180, and Arg217 each bind ATP. Thr65 serves as a coordination point for Mg(2+). The tract at residues Thr181 to Glu251 is small ATPAse domain (RuvB-S). The head domain (RuvB-H) stretch occupies residues Glu254 to Phe338. Residues Arg290, Arg309, and Arg314 each coordinate DNA.

It belongs to the RuvB family. As to quaternary structure, homohexamer. Forms an RuvA(8)-RuvB(12)-Holliday junction (HJ) complex. HJ DNA is sandwiched between 2 RuvA tetramers; dsDNA enters through RuvA and exits via RuvB. An RuvB hexamer assembles on each DNA strand where it exits the tetramer. Each RuvB hexamer is contacted by two RuvA subunits (via domain III) on 2 adjacent RuvB subunits; this complex drives branch migration. In the full resolvosome a probable DNA-RuvA(4)-RuvB(12)-RuvC(2) complex forms which resolves the HJ.

The protein resides in the cytoplasm. It catalyses the reaction ATP + H2O = ADP + phosphate + H(+). Functionally, the RuvA-RuvB-RuvC complex processes Holliday junction (HJ) DNA during genetic recombination and DNA repair, while the RuvA-RuvB complex plays an important role in the rescue of blocked DNA replication forks via replication fork reversal (RFR). RuvA specifically binds to HJ cruciform DNA, conferring on it an open structure. The RuvB hexamer acts as an ATP-dependent pump, pulling dsDNA into and through the RuvAB complex. RuvB forms 2 homohexamers on either side of HJ DNA bound by 1 or 2 RuvA tetramers; 4 subunits per hexamer contact DNA at a time. Coordinated motions by a converter formed by DNA-disengaged RuvB subunits stimulates ATP hydrolysis and nucleotide exchange. Immobilization of the converter enables RuvB to convert the ATP-contained energy into a lever motion, pulling 2 nucleotides of DNA out of the RuvA tetramer per ATP hydrolyzed, thus driving DNA branch migration. The RuvB motors rotate together with the DNA substrate, which together with the progressing nucleotide cycle form the mechanistic basis for DNA recombination by continuous HJ branch migration. Branch migration allows RuvC to scan DNA until it finds its consensus sequence, where it cleaves and resolves cruciform DNA. The protein is Holliday junction branch migration complex subunit RuvB of Geobacter metallireducens (strain ATCC 53774 / DSM 7210 / GS-15).